The chain runs to 318 residues: MDTSEPLEEGDRTHEQRPHTRSNPEGAEDREGLPQAGVGSRSEGEGEAAQVDDPLPTTTAVPTNCTPPPTLEFQLKTPRVNCPEKVIICLDLSEEMSTQKLESFNGSKANALNSSQKMIEMFVRTKHKIDKRHEFALVVANNEAMWLSGFTSDPREVCSCLYDLETNVCESFNLEGLFNLIQQRTEFPVTDNVQTIPPPYVVRIILIYSRPASQPALNLTDNMKKMLQCPYFFFDVIYIHNGSEEEELRWKDIFSFFSGLDSKGTSYKYEVSITGPALELHNCMARLLAHPLQRPFQSHAAYSLLEEEEESPESEVTV.

The segment at 1 to 67 (MDTSEPLEEG…TTAVPTNCTP (67 aa)) is disordered. Residues 9 to 18 (EGDRTHEQRP) show a composition bias toward basic and acidic residues. Positions 86-287 (VIICLDLSEE…LELHNCMARL (202 aa)) are VWFA-like.

It belongs to the BABAM1 family. As to quaternary structure, component of the ARISC complex, at least composed of uimc1/rap80, abraxas1, brcc3/brcc36, BABAM2 and babam1/nba1. Component of the BRCA1-A complex, at least composed of brca1, bard1, uimc1/rap80, abraxas1, brcc3/brcc36, BABAM2 and babam1/nba1. In the BRCA1-A complex, interacts directly with abraxas1 and BABAM2. Component of the BRISC complex, at least composed of abraxas2, brcc3/brcc36, babam2 and babam1/nba1.

It localises to the cytoplasm. The protein localises to the nucleus. Its function is as follows. Component of the BRCA1-A complex, a complex that specifically recognizes 'Lys-63'-linked ubiquitinated histones H2A and H2AX at DNA lesions sites, leading to target the BRCA1-BARD1 heterodimer to sites of DNA damage at double-strand breaks (DSBs). The BRCA1-A complex also possesses deubiquitinase activity that specifically removes 'Lys-63'-linked ubiquitin on histones H2A and H2AX. In the BRCA1-A complex, it is required for the complex integrity and its localization at DSBs. Component of the BRISC complex, a multiprotein complex that specifically cleaves 'Lys-63'-linked ubiquitin in various substrates. In these 2 complexes, it is probably required to maintain the stability of BABAM2 and help the 'Lys-63'-linked deubiquitinase activity mediated by brcc3/brcc36 component. The BRISC complex is required for normal mitotic spindle assembly and microtubule attachment to kinetochores via its role in deubiquitinating numa1. Plays a role in interferon signaling via its role in the deubiquitination of the interferon receptor ifnar1; deubiquitination increases ifnar1 activity by enhancing its stability and cell surface expression. Down-regulates the response to bacterial lipopolysaccharide (LPS) via its role in ifnar1 deubiquitination. The chain is BRISC and BRCA1-A complex member 1 (babam1) from Xenopus tropicalis (Western clawed frog).